The following is a 281-amino-acid chain: CMT1A duplicated region transcript 15 protein-like protein (281 aa).

2 disordered regions span residues 107-131 (KPAW…DQPS) and 150-187 (AENV…HGGG). Residues 108–120 (PAWEEPPPERALE) are compositionally biased toward basic and acidic residues. Over residues 165 to 178 (STAPASRSHAAPSP) the composition is skewed to low complexity. Residues 207-227 (AGTTALLLQGLFIVLILVGYI) traverse the membrane as a helical segment.

It is found in the membrane. The chain is CMT1A duplicated region transcript 15 protein-like protein (CDRT15L2) from Homo sapiens (Human).